The sequence spans 452 residues: MTNIALLQSLGLFDARVPRYTSYPAAPVFSGAVGADFQAQAIEALDPAVPISVYIHVPFCERLCWFCACRTQGTQTLAPVEAYVGTLLQELELVKKHLPAGVKAGRLHWGGGTPTILSPELIHKLAQAIKAVIPFAEDYEFSVEIDPMMVDEPKIRALSEEGMNRASIGIQDFTDIVQSAIGREQPFENTRACVETLRRYGVHSLNTDLVYGLPHQNRESLAATIDKVLQLGPDRVAIFGYAHVPWMAKRQKLIDENVLPNDMERHELANLAAKMFTEGGFERIGIDHFARPDDSMAVAARSGKLRRNFQGYTDDTCPTLLGIGASSISKFEQGYLQNTAATAAYIKAIEEGRLPGYRGHRMTDEDYLHGRAIEMIMCEFRLDLPALRARFGEAAETMVPRITEAAAKFAPFITVDEAGSMSIEAEGRALTRMIARVFDAYETPEARYSQAS.

In terms of domain architecture, Radical SAM core spans 45–278 (LDPAVPISVY…ANLAAKMFTE (234 aa)). An S-adenosyl-L-methionine-binding site is contributed by Tyr54. Residues Cys60 and Cys64 each coordinate [4Fe-4S] cluster. Phe66 contributes to the S-adenosyl-L-methionine binding site. Cys67 is a [4Fe-4S] cluster binding site. S-adenosyl-L-methionine contacts are provided by residues Gly111, 112–113 (GT), Glu144, Gln171, Arg183, Asp208, Ala242, and Ile328.

It belongs to the anaerobic coproporphyrinogen-III oxidase family. In terms of assembly, monomer. [4Fe-4S] cluster serves as cofactor.

The protein resides in the cytoplasm. It catalyses the reaction coproporphyrinogen III + 2 S-adenosyl-L-methionine = protoporphyrinogen IX + 2 5'-deoxyadenosine + 2 L-methionine + 2 CO2. Its pathway is porphyrin-containing compound metabolism; protoporphyrin-IX biosynthesis; protoporphyrinogen-IX from coproporphyrinogen-III (AdoMet route): step 1/1. Functionally, involved in the heme and chlorophyll biosynthesis. Catalyzes the anaerobic oxidative decarboxylation of propionate groups of rings A and B of coproporphyrinogen III to yield the vinyl groups in protoporphyrinogen IX. The protein is Oxygen-independent coproporphyrinogen III oxidase (hemN) of Cereibacter sphaeroides (strain ATCC 17025 / ATH 2.4.3) (Rhodobacter sphaeroides).